The following is a 326-amino-acid chain: 5-dehydro-2-deoxygluconokinase (326 aa).

It belongs to the carbohydrate kinase PfkB family.

It carries out the reaction 5-dehydro-2-deoxy-D-gluconate + ATP = 6-phospho-5-dehydro-2-deoxy-D-gluconate + ADP + H(+). Its pathway is polyol metabolism; myo-inositol degradation into acetyl-CoA; acetyl-CoA from myo-inositol: step 5/7. Catalyzes the phosphorylation of 5-dehydro-2-deoxy-D-gluconate (2-deoxy-5-keto-D-gluconate or DKG) to 6-phospho-5-dehydro-2-deoxy-D-gluconate (DKGP). The chain is 5-dehydro-2-deoxygluconokinase from Shouchella clausii (strain KSM-K16) (Alkalihalobacillus clausii).